Here is a 414-residue protein sequence, read N- to C-terminus: 3-oxoacyl-[acyl-carrier-protein] synthase 2 (414 aa).

One can recognise a Ketosynthase family 3 (KS3) domain in the interval 4 to 411 (NKRVVITGMG…GHNAVLVFKK (408 aa)). Residues C165, H304, and H341 each act as for beta-ketoacyl synthase activity in the active site.

This sequence belongs to the thiolase-like superfamily. Beta-ketoacyl-ACP synthases family.

The catalysed reaction is a fatty acyl-[ACP] + malonyl-[ACP] + H(+) = a 3-oxoacyl-[ACP] + holo-[ACP] + CO2. It catalyses the reaction (9Z)-hexadecenoyl-[ACP] + malonyl-[ACP] + H(+) = 3-oxo-(11Z)-octadecenoyl-[ACP] + holo-[ACP] + CO2. It participates in lipid metabolism; fatty acid biosynthesis. In terms of biological role, involved in the type II fatty acid elongation cycle. Catalyzes the elongation of a wide range of acyl-ACP by the addition of two carbons from malonyl-ACP to an acyl acceptor. Can efficiently catalyze the conversion of palmitoleoyl-ACP (cis-hexadec-9-enoyl-ACP) to cis-vaccenoyl-ACP (cis-octadec-11-enoyl-ACP), an essential step in the thermal regulation of fatty acid composition. This Staphylococcus aureus (strain Mu50 / ATCC 700699) protein is 3-oxoacyl-[acyl-carrier-protein] synthase 2 (fabF).